We begin with the raw amino-acid sequence, 419 residues long: Putative L-glutamine:3-amino-2,3-dideoxy-scyllo-inosose aminotransferase (419 aa).

Lys-199 is modified (N6-(pyridoxal phosphate)lysine).

The protein belongs to the DegT/DnrJ/EryC1 family. L-glutamine:2-deoxy-scyllo-inosose/scyllo-inosose aminotransferase subfamily. Pyridoxal 5'-phosphate serves as cofactor.

The enzyme catalyses 3-amino-2,3-dideoxy-scyllo-inosose + L-glutamine = 2-deoxystreptamine + 2-oxoglutaramate. Its pathway is metabolic intermediate biosynthesis; 2-deoxystreptamine biosynthesis; 2-deoxystreptamine from D-glucose 6-phosphate: step 4/4. The protein operates within antibiotic biosynthesis; kanamycin biosynthesis. Functionally, catalyzes the transamination of 3-amino-2,3-dideoxy-scyllo-inosose (amino-DOI) into 2-deoxystreptamine (DOS). The sequence is that of Putative L-glutamine:3-amino-2,3-dideoxy-scyllo-inosose aminotransferase (kanD) from Streptomyces kanamyceticus.